Reading from the N-terminus, the 130-residue chain is MSMQDTLADMFTRIRNAQMAEKETVRMPSSKMKVAVANVLKEEGFITDYKASEEAKPVLEITLKYYQGAPVIENISRASRPGLRQYKAANDLPTVNGGLGIAIVSTSKGVMTDRAARKAGVGGEVICTVF.

This sequence belongs to the universal ribosomal protein uS8 family. Part of the 30S ribosomal subunit. Contacts proteins S5 and S12.

Functionally, one of the primary rRNA binding proteins, it binds directly to 16S rRNA central domain where it helps coordinate assembly of the platform of the 30S subunit. The polypeptide is Small ribosomal subunit protein uS8 (Hahella chejuensis (strain KCTC 2396)).